The chain runs to 1396 residues: Sterol 3-beta-glucosyltransferase (1396 aa).

Positions 1 to 16 are enriched in basic and acidic residues; the sequence is MRPFIDDAKRRAERRL. 4 disordered regions span residues 1–21, 40–64, 83–196, and 209–232; these read MRPFIDDAKRRAERRLSASRQ, DADDAQMDYTAPPSSNDSRDGMQYM, ARFD…RAAP, and ETENPEENPQTLEEKEQGVSKKSQ. Residues 94–107 are compositionally biased toward basic and acidic residues; the sequence is ETRTRPRFLSEKPF. Residues 186–196 show a composition bias toward low complexity; the sequence is RPRSATPRAAP. The GRAM 1 domain occupies 238–273; it reads RQLMEMFRFPTPEKVVVEYACSLLQSMLLQGYMYVT. A PH domain is found at 289–388; sequence RVIKSGYIYK…WVRALQKVIF (100 aa). 2 disordered regions span residues 460–532 and 571–627; these read GTPT…SSSS and TIHT…ESKD. 2 stretches are compositionally biased toward polar residues: residues 484–532 and 571–584; these read GSQN…SSSS and TIHTWQQRTSGTAR. A compositionally biased stretch (basic and acidic residues) spans 588-602; sequence RHSDEITRSTTEHGL. The GRAM 2 domain maps to 717–783; sequence ERFRAHFALP…HDIENVEKEK (67 aa). 10 residues coordinate UDP-alpha-D-glucose: Ser-905, Arg-906, Asp-908, Ala-1208, His-1210, His-1223, Gly-1227, Thr-1228, Asp-1247, and Gln-1248. Positions 1324-1343 are enriched in low complexity; that stretch reads SSISSTPFSPTPSTKTSDDQ. The segment at 1324-1346 is disordered; it reads SSISSTPFSPTPSTKTSDDQNAN.

This sequence belongs to the glycosyltransferase 28 family.

The protein resides in the cytoplasm. The protein localises to the preautophagosomal structure membrane. It catalyses the reaction a sterol + UDP-alpha-D-glucose = a sterol 3-beta-D-glucoside + UDP + H(+). The catalysed reaction is ergosterol + UDP-alpha-D-glucose = ergosteryl 3-beta-D-glucoside + UDP + H(+). Functionally, sterol glycosyltransferase responsible for the glycosylation of ergosterol to form ergosterol-glucoside. The sequence is that of Sterol 3-beta-glucosyltransferase from Emericella nidulans (strain FGSC A4 / ATCC 38163 / CBS 112.46 / NRRL 194 / M139) (Aspergillus nidulans).